The chain runs to 547 residues: MAAKDVKFGNDARVKMLAGVNVLADAVKVTLGPKGRNVILDKSFGAPTITKDGVSVAREIELEDKFENMGAQMVKEVASKANDAAGDGTTTATVLAQAIVNEGLKAVAAGMNPMDLKRGIDKAVAAVVSELKALSKPCETSKEIEQVGTISANSDSIVGQLIAQAMEKVGKEGVITVEDGTGLEDELDVVEGMQFDRGYLSPYFINKPETATVEMDNPYILLVDKKISNIRELLPVLEAVAKAGKPLLIIAEDVEGEALATLVVNTMRGIVKVAAVKAPGFGDRRKAMLQDIAILTAGTVISEEIGMELEKAALEDLGQAKRVVINKDNTTIIDGVGDEAQIKGRVAQIRQQIEESTSDYDKEKLQERVAKLAGGVAVIKVGAATEVEMKEKKDRVEDALHATRAAVEEGIVAGGGVALIRAASKAAANLQGDNEEQNVGIKLALRAMEAPLRQIVANAGEEASVVASAVKNGEGNYGYNAGTEEYGDMIAMGILDPTKVTRSALQFAASIAGLMITTEAMVTELPKDDKLDPSAAMGGMGGMGGMM.

ATP is bound by residues 30–33 (TLGP), lysine 51, 87–91 (DGTTT), glycine 415, and aspartate 496.

It belongs to the chaperonin (HSP60) family. In terms of assembly, forms a cylinder of 14 subunits composed of two heptameric rings stacked back-to-back. Interacts with the co-chaperonin GroES.

The protein resides in the cytoplasm. It carries out the reaction ATP + H2O + a folded polypeptide = ADP + phosphate + an unfolded polypeptide.. Functionally, together with its co-chaperonin GroES, plays an essential role in assisting protein folding. The GroEL-GroES system forms a nano-cage that allows encapsulation of the non-native substrate proteins and provides a physical environment optimized to promote and accelerate protein folding. The polypeptide is Chaperonin GroEL (Actinobacillus succinogenes (strain ATCC 55618 / DSM 22257 / CCUG 43843 / 130Z)).